The chain runs to 207 residues: Small ribosomal subunit protein uS3c (207 aa).

The 71-residue stretch at 39–109 (IRDYIFTNLL…QLKINIIDVT (71 aa)) folds into the KH type-2 domain.

This sequence belongs to the universal ribosomal protein uS3 family. As to quaternary structure, part of the 30S ribosomal subunit.

It is found in the plastid. The protein resides in the chloroplast. The polypeptide is Small ribosomal subunit protein uS3c (rps3) (Cyanidium caldarium (Red alga)).